A 118-amino-acid chain; its full sequence is DNA-binding protein inhibitor ID-3-A (118 aa).

A bHLH domain is found at 32–84 (SHKGPGMDEPMGLLYDMNGCYSKLKELVPGIPQGSKLSQVEILQHVIDYIFDL).

Homodimer. Heterodimer with other HLH proteins. Interacts (via HLH domain) with the bHLH protein hes4/hairy2 (via Orange domain). Interacts with stat3. In terms of tissue distribution, at gastrula stage, expressed in all three germ layers, but becomes localized to discrete domains of the developing nervous system during neurulation, including the anterior neural plate, cement gland, eye anlagen, otic placode and both cranial and trunk premigratory and early migratory neural crest cells. Also expressed in the most dorsal and ventral portions of the myotome, the developing heart and anterior blood islets, and in the tail fin mesenchyme. Expressed at a low level in limbs, with expression decreasing as limbs develop, but expressed at a high level in blastemas (regenerated limbs), where expression is localized to both the blastermal epidermis and mesenchyme. Widely expressed in adults including the liver and heart.

The protein localises to the nucleus. In terms of biological role, transcriptional regulator (lacking a basic DNA binding domain) which negatively regulates the basic helix-loop-helix (bHLH) transcription factors by forming heterodimers and inhibiting their DNA binding and transcriptional activity. Influences cell fate decisions in the embryo by sequestering and blocking the activity of the bHLH transcription factors that control these decisions. Inhibits the binding of myogenic bHLH-containing complexes to E-box DNA, thereby preventing activation of muscle-specific target genes. Also inhibits the activity of neurogenic factor neurod1/neuroD. Plays a role in cell cycle progression and survival of neural crest progenitors; binding to either hes4-B/hairy2b or stat3 blocks the formation of transcription factor complexes and the repressor function of hes4-B/hairy2B, to allow neural crest progenitors to differentiate. May play a role in the regulation of the circadian rhythm. In Xenopus laevis (African clawed frog), this protein is DNA-binding protein inhibitor ID-3-A (id3-a).